Reading from the N-terminus, the 430-residue chain is uncharacterized protein (430 aa).

10 consecutive transmembrane segments (helical) span residues 13-33, 47-67, 88-108, 138-158, 228-248, 264-284, 296-316, 319-339, 358-378, and 383-403; these read FFAA…FAFF, LAEL…GVVA, VVLF…ILFI, GLNQ…GAFM, LIFG…LPMF, SVFT…GTLI, IPIF…ILWV, AAAF…GGWM, FMMF…PKFV, and YLYY…FIAL.

This sequence belongs to the major facilitator superfamily.

Its subcellular location is the cell membrane. This is an uncharacterized protein from Bacillus subtilis (strain 168).